Reading from the N-terminus, the 403-residue chain is Acetylornithine aminotransferase (403 aa).

Pyridoxal 5'-phosphate-binding positions include 101-102 (GA) and F134. R137 contributes to the N(2)-acetyl-L-ornithine binding site. 219–222 (DEVQ) is a binding site for pyridoxal 5'-phosphate. K248 bears the N6-(pyridoxal phosphate)lysine mark. N(2)-acetyl-L-ornithine is bound at residue T276. T277 is a binding site for pyridoxal 5'-phosphate.

The protein belongs to the class-III pyridoxal-phosphate-dependent aminotransferase family. ArgD subfamily. In terms of assembly, homodimer. Pyridoxal 5'-phosphate is required as a cofactor.

The protein resides in the cytoplasm. It catalyses the reaction N(2)-acetyl-L-ornithine + 2-oxoglutarate = N-acetyl-L-glutamate 5-semialdehyde + L-glutamate. It participates in amino-acid biosynthesis; L-arginine biosynthesis; N(2)-acetyl-L-ornithine from L-glutamate: step 4/4. This chain is Acetylornithine aminotransferase, found in Brucella melitensis biotype 1 (strain ATCC 23456 / CCUG 17765 / NCTC 10094 / 16M).